We begin with the raw amino-acid sequence, 761 residues long: Spindle assembly abnormal protein 4 (761 aa).

Positions 1–11 are enriched in acidic residues; it reads MLPSENGDEDQ. A disordered region spans residues 1–109; it reads MLPSENGDED…SNERREEDNV (109 aa). A compositionally biased stretch (polar residues) spans 51–62; that stretch reads TPTNSAPSSART. A compositionally biased stretch (basic and acidic residues) spans 90–106; that stretch reads ESHDSGNRSESNERREE. A coiled-coil region spans residues 129–156; the sequence is ETCSKVSEEATQLRAEADRITAQANFIN. Residues 164-173 show a composition bias toward low complexity; it reads TPSSYSSNIS. Disordered regions lie at residues 164-228 and 252-280; these read TPSS…QARP and PRRQ…SEHV. Residues 210–223 show a composition bias toward polar residues; the sequence is QTLSSLASSGSLDT. The segment covering 265-280 has biased composition (basic and acidic residues); sequence SQKENVPERKAPSEHV. Positions 326 to 464 form a coiled coil; the sequence is RKKQEEAYAK…EKDDREKEMF (139 aa). Over residues 479–497 the composition is skewed to low complexity; sequence ATGSAASSRLPSVSSLASS. Residues 479–510 are disordered; sequence ATGSAASSRLPSVSSLASSMKTGSTGKGRTVS.

The protein localises to the cytoplasm. The protein resides in the cytoskeleton. Its subcellular location is the microtubule organizing center. It localises to the centrosome. Functionally, required for centrosome duplication. Plays a central role in determining centrosome size. This is Spindle assembly abnormal protein 4 (sas-4) from Caenorhabditis briggsae.